A 644-amino-acid chain; its full sequence is Macrolide export ATP-binding/permease protein MacB (644 aa).

The region spanning 4-242 (IECKNINRYF…SNVGRIREKA (239 aa)) is the ABC transporter domain. 40-47 (GQSGSGKS) is a binding site for ATP. Helical transmembrane passes span 270 to 290 (LLTMLGIIIGIASVVSVVALG), 524 to 544 (IALISLVVGGIGVMNIMLVSV), 574 to 594 (LICVIGGLVGVGLSAAVSLVF), and 607 to 627 (AMSVIGAVACSTGIGIAFGFM).

This sequence belongs to the ABC transporter superfamily. Macrolide exporter (TC 3.A.1.122) family. As to quaternary structure, homodimer.

The protein resides in the cell inner membrane. Its function is as follows. Non-canonical ABC transporter that contains transmembrane domains (TMD), which form a pore in the inner membrane, and an ATP-binding domain (NBD), which is responsible for energy generation. Confers resistance against macrolides. This chain is Macrolide export ATP-binding/permease protein MacB, found in Neisseria meningitidis serogroup B (strain ATCC BAA-335 / MC58).